The following is a 295-amino-acid chain: Light-independent protochlorophyllide reductase iron-sulfur ATP-binding protein (295 aa).

Residues 39-44 and K68 contribute to the ATP site; that span reads GIGKST. S43 contributes to the Mg(2+) binding site. Residues C124 and C158 each contribute to the [4Fe-4S] cluster site. Residues 209-210 and 233-235 each bind ATP; these read NR and PDL.

Belongs to the NifH/BchL/ChlL family. In terms of assembly, homodimer. Protochlorophyllide reductase is composed of three subunits; BchL, BchN and BchB. It depends on [4Fe-4S] cluster as a cofactor.

The catalysed reaction is chlorophyllide a + oxidized 2[4Fe-4S]-[ferredoxin] + 2 ADP + 2 phosphate = protochlorophyllide a + reduced 2[4Fe-4S]-[ferredoxin] + 2 ATP + 2 H2O. Its pathway is porphyrin-containing compound metabolism; bacteriochlorophyll biosynthesis (light-independent). Its function is as follows. Component of the dark-operative protochlorophyllide reductase (DPOR) that uses Mg-ATP and reduced ferredoxin to reduce ring D of protochlorophyllide (Pchlide) to form chlorophyllide a (Chlide). This reaction is light-independent. The L component serves as a unique electron donor to the NB-component of the complex, and binds Mg-ATP. The polypeptide is Light-independent protochlorophyllide reductase iron-sulfur ATP-binding protein (Rhodospirillum rubrum (strain ATCC 11170 / ATH 1.1.1 / DSM 467 / LMG 4362 / NCIMB 8255 / S1)).